A 561-amino-acid chain; its full sequence is GPI mannosyltransferase 3 (561 aa).

Transmembrane regions (helical) follow at residues 3 to 25 (LIYV…QTYY), 64 to 84 (IAGL…LLVV), 110 to 130 (WALF…RTLA), 155 to 175 (LWPA…WLPL), 195 to 215 (FVLI…YWHG), 246 to 266 (FSVG…FGVM), 275 to 295 (YPVS…LSAV), and 328 to 348 (TMLW…AWYL). 2 N-linked (GlcNAc...) asparagine glycosylation sites follow: Asn-398 and Asn-456. The disordered stretch occupies residues 525 to 546 (ENAFNRGPDSGQHEPDVHDHPP). The segment covering 535–546 (GQHEPDVHDHPP) has biased composition (basic and acidic residues).

The protein belongs to the glycosyltransferase 22 family. PIGB subfamily.

The protein localises to the endoplasmic reticulum membrane. It functions in the pathway glycolipid biosynthesis; glycosylphosphatidylinositol-anchor biosynthesis. Mannosyltransferase involved in glycosylphosphatidylinositol-anchor biosynthesis. Transfers the third alpha-1,2-mannose to Man2-GlcN-acyl-PI during GPI precursor assembly. This is GPI mannosyltransferase 3 from Drosophila melanogaster (Fruit fly).